The sequence spans 839 residues: Heat shock 70 kDa protein 4L (839 aa).

Phosphoserine is present on residues Ser-74 and Ser-508. Positions 503–554 (LEGDHSDAPMETETSFKNENKDNMDKMQVDQEEGHQKCHAEHTPEEEIDHTG) are enriched in basic and acidic residues. A disordered region spans residues 503–567 (LEGDHSDAPM…KSAVSDKQDR (65 aa)). Thr-545 carries the phosphothreonine modification. Ser-579 bears the Phosphoserine mark. Position 761 is a phosphothreonine (Thr-761). The tract at residues 786–839 (IYKPKPKAEVPEDKPKANSEHNGPMDGQSGTETKSDSTKDSSQHTKSSGEMEVD) is disordered. 2 stretches are compositionally biased toward basic and acidic residues: residues 791 to 804 (PKAE…KANS) and 818 to 839 (TKSD…MEVD).

The protein belongs to the heat shock protein 70 family. As to quaternary structure, homodimer.

The protein resides in the cytoplasm. It is found in the nucleus. Its function is as follows. Possesses chaperone activity in vitro where it inhibits aggregation of citrate synthase. The sequence is that of Heat shock 70 kDa protein 4L (HSPA4L) from Homo sapiens (Human).